A 633-amino-acid chain; its full sequence is Chaperone protein DnaK (633 aa).

Thr-198 bears the Phosphothreonine; by autocatalysis mark.

This sequence belongs to the heat shock protein 70 family.

In terms of biological role, acts as a chaperone. The polypeptide is Chaperone protein DnaK (Rhodopseudomonas palustris (strain BisA53)).